We begin with the raw amino-acid sequence, 107 residues long: Phosphoribosyl-ATP pyrophosphatase (107 aa).

The protein belongs to the PRA-PH family.

It is found in the cytoplasm. It carries out the reaction 1-(5-phospho-beta-D-ribosyl)-ATP + H2O = 1-(5-phospho-beta-D-ribosyl)-5'-AMP + diphosphate + H(+). It functions in the pathway amino-acid biosynthesis; L-histidine biosynthesis; L-histidine from 5-phospho-alpha-D-ribose 1-diphosphate: step 2/9. This is Phosphoribosyl-ATP pyrophosphatase from Methylobacterium nodulans (strain LMG 21967 / CNCM I-2342 / ORS 2060).